We begin with the raw amino-acid sequence, 317 residues long: SVP1-like protein 2 (317 aa).

WD repeat units lie at residues 119-159 (AHST…KMAE) and 164-203 (VDHA…NAPY).

Belongs to the WD repeat PROPPIN family.

It is found in the vacuole membrane. It localises to the cytoplasmic vesicle membrane. In terms of biological role, involved in mitochondrial or peroxisomal functions and amino acid signaling pathways. This chain is SVP1-like protein 2 (hsv2), found in Emericella nidulans (strain FGSC A4 / ATCC 38163 / CBS 112.46 / NRRL 194 / M139) (Aspergillus nidulans).